The sequence spans 489 residues: Endothelial zinc finger protein induced by tumor necrosis factor alpha (489 aa).

A compositionally biased stretch (basic and acidic residues) spans 1-15 (MKELDPKNDISEDKL). Disordered stretches follow at residues 1–61 (MKEL…PLGI) and 98–122 (EKGA…KPPM). C2H2-type zinc fingers lie at residues 130 to 152 (YDCS…QRIH), 158 to 180 (FECD…QRVH), 186 to 208 (YACG…QRTH), 214 to 236 (YVCD…ERIH), 242 to 264 (YACG…QRTH), 270 to 292 (YVCP…QRTH), 298 to 320 (YACK…QRNH), 326 to 348 (YVCG…QRFH), 354 to 376 (FECS…QRIH), 382 to 404 (YECY…QIVH), 410 to 432 (YVCG…QRIH), 438 to 460 (YRCG…QRIH), and 466 to 488 (YRCG…LRIH).

This sequence belongs to the krueppel C2H2-type zinc-finger protein family. In terms of tissue distribution, highly expressed in placenta, followed by brain, testis, pancreas, heart, small intestine, muscle, uterus, prostate and peripheral blood leukocytes. Not detected in liver, lung, colon, stomach, salivary and thyroid gland.

It is found in the nucleus. Its function is as follows. May be involved in transcriptional regulation. This Homo sapiens (Human) protein is Endothelial zinc finger protein induced by tumor necrosis factor alpha (ZNF71).